A 1603-amino-acid polypeptide reads, in one-letter code: DNA polymerase theta (1603 aa).

In terms of domain architecture, Helicase ATP-binding spans 38–208 (EARQFEDQHL…WLDGAKVFEA (171 aa)). Residue 51 to 58 (APTSAGKS) coordinates ATP. The short motif at 149–152 (DEMH) is the DEAH box element. The 152-residue stretch at 283–434 (TDSSLLEILK…GVLTRKRDAE (152 aa)) folds into the Helicase C-terminal domain.

The protein belongs to the DNA polymerase type-A family.

The protein localises to the nucleus. It carries out the reaction DNA(n) + a 2'-deoxyribonucleoside 5'-triphosphate = DNA(n+1) + diphosphate. Its function is as follows. DNA polymerase that promotes microhomology-mediated end-joining (MMEJ), an alternative non-homologous end-joining (NHEJ) machinery triggered in response to double-strand breaks in DNA. MMEJ is an error-prone repair pathway that produces deletions of sequences from the strand being repaired and promotes genomic rearrangements, such as telomere fusions. Required to prevent extensive loss of sequences near G-quadruplex (G4) DNA sites, which are prone to cause genome alterations, by generating deletions. The sequence is that of DNA polymerase theta from Caenorhabditis elegans.